Reading from the N-terminus, the 281-residue chain is 2-dehydro-3-deoxyphosphooctonate aldolase (281 aa).

This sequence belongs to the KdsA family.

Its subcellular location is the cytoplasm. It catalyses the reaction D-arabinose 5-phosphate + phosphoenolpyruvate + H2O = 3-deoxy-alpha-D-manno-2-octulosonate-8-phosphate + phosphate. The protein operates within carbohydrate biosynthesis; 3-deoxy-D-manno-octulosonate biosynthesis; 3-deoxy-D-manno-octulosonate from D-ribulose 5-phosphate: step 2/3. It functions in the pathway bacterial outer membrane biogenesis; lipopolysaccharide biosynthesis. In Acidithiobacillus ferrooxidans (strain ATCC 23270 / DSM 14882 / CIP 104768 / NCIMB 8455) (Ferrobacillus ferrooxidans (strain ATCC 23270)), this protein is 2-dehydro-3-deoxyphosphooctonate aldolase.